The following is a 696-amino-acid chain: SEC14 domain and spectrin repeat-containing protein 1 (696 aa).

The region spanning 1 to 153 (MEASVILPIL…DFGGSLTYDH (153 aa)) is the CRAL-TRIO domain. 3 Spectrin repeats span residues 275-378 (EEIQ…NLLQ), 381-494 (LEFH…LKML), and 500-602 (FKCE…HRLE).

The protein belongs to the SOLO family. Interacts (via the spectrin 1 repeat) with TRPC4 and TRPC5 (via CIRB domain). Interacts with CTNNB1.

May act as the primary docking protein directing membrane turnover and assembly of the transient receptor potential channels TRPC4 and TRPC5. Binds phospholipids such as phosphatidylinositol monophosphates, phosphatidylinositol diphosphates (PIP2s) and phosphatidic acid, but not less polar lipids including phosphatidylcholine, phosphatidylserine, and phosphatidylinositol. The binding to PIP2s is calcium dependent. Might be involved in the plasma membrane localization of CTNNB1. This chain is SEC14 domain and spectrin repeat-containing protein 1 (Sestd1), found in Mus musculus (Mouse).